The following is a 212-amino-acid chain: ER lumen protein-retaining receptor 1 (212 aa).

The Lumenal segment spans residues 1-4 (MNLF). A helical transmembrane segment spans residues 5–24 (RFLGDLSHLLAIILLLLKIW). At 25 to 32 (KSRSCAGI) the chain is on the cytoplasmic side. A helical membrane pass occupies residues 33–52 (SGKSQVLFAVVFTARYLDLF). The tract at residues 47–48 (RY) is interaction with the K-D-E-L motif on target proteins. Over 53–58 (TNYISL) the chain is Lumenal. Residues 59 to 79 (YNTCMKVVYIACSFTTVWLIY) form a helical membrane-spanning segment. The Cytoplasmic segment spans residues 80 to 92 (SKFKATYDGNHDT). The helical transmembrane segment at 93 to 110 (FRVEFLVVPTAILAFLVN) threads the bilayer. Topologically, residues 111–116 (HDFTPL) are lumenal. The helical transmembrane segment at 117-135 (EILWTFSIYLESVAILPQL) threads the bilayer. Residues 136–149 (FMVSKTGEAETITS) are Cytoplasmic-facing. The helical transmembrane segment at 150–168 (HYLFALGVYRTLYLFNWIW) threads the bilayer. The interaction with the K-D-E-L motif on target proteins stretch occupies residues 159–169 (RTLYLFNWIWR). Over 169-178 (RYHFEGFFDL) the chain is Lumenal. Residues 179–199 (IAIVAGLVQTVLYCDFFYLYI) form a helical membrane-spanning segment. At 200-212 (TKVLKGKKLSLPA) the chain is on the cytoplasmic side. The segment at 204–207 (KGKK) is important for recycling of cargo proteins with the sequence motif K-D-E-L from the Golgi to the endoplasmic reticulum. S209 is modified (phosphoserine; by PKA).

Belongs to the ERD2 family. In terms of assembly, upon ligand binding the receptor oligomerizes and interacts with components of the transport machinery such as ARFGAP1 and ARF1. In terms of processing, phosphorylation by PKA at Ser-209 is required for endoplasmic reticulum retention function.

The protein localises to the golgi apparatus membrane. Its subcellular location is the cytoplasmic vesicle. It localises to the COPI-coated vesicle membrane. It is found in the endoplasmic reticulum membrane. The protein resides in the endoplasmic reticulum-Golgi intermediate compartment membrane. In terms of biological role, receptor for the C-terminal sequence motif K-D-E-L that is present on endoplasmic reticulum resident proteins and that mediates their recycling from the Golgi back to the endoplasmic reticulum. This chain is ER lumen protein-retaining receptor 1 (KDELR1), found in Homo sapiens (Human).